A 249-amino-acid polypeptide reads, in one-letter code: Cell division protein FtsQ (249 aa).

Topologically, residues 1–6 (MKFILF) are cytoplasmic. Residues 7–23 (ALLVSAGSWYGWKQLHS) traverse the membrane as a helical segment. Residues 24-249 (QDAVSKPIRY…YKNVMKERRI (226 aa)) lie on the Periplasmic side of the membrane. A POTRA domain is found at 29–98 (KPIRYVKIEG…DAVHIKITEQ (70 aa)).

It belongs to the FtsQ/DivIB family. FtsQ subfamily. Part of a complex composed of FtsB, FtsL and FtsQ.

It is found in the cell inner membrane. Essential cell division protein. May link together the upstream cell division proteins, which are predominantly cytoplasmic, with the downstream cell division proteins, which are predominantly periplasmic. May control correct divisome assembly. This chain is Cell division protein FtsQ, found in Methylomonas methanica (strain DSM 25384 / MC09).